The sequence spans 179 residues: MSLKHRYRETIRPKLLKDLGLSNIHQVPKVVKVNVNRGLGEAAQNSKTLEASLSEMATITGQKALVTRAKKAIAGFKIREGMPIGCTVTLRGERMYAFLERLINLALPRIRDFRGVSPKSFDGRGNYTLGVKEQLIFPEISFDKIDTIRGMDITIVTSARSDEEGRALLKALGFPFRST.

This sequence belongs to the universal ribosomal protein uL5 family. In terms of assembly, part of the 50S ribosomal subunit; part of the 5S rRNA/L5/L18/L25 subcomplex. Contacts the 5S rRNA and the P site tRNA. Forms a bridge to the 30S subunit in the 70S ribosome.

This is one of the proteins that bind and probably mediate the attachment of the 5S RNA into the large ribosomal subunit, where it forms part of the central protuberance. In the 70S ribosome it contacts protein S13 of the 30S subunit (bridge B1b), connecting the 2 subunits; this bridge is implicated in subunit movement. Contacts the P site tRNA; the 5S rRNA and some of its associated proteins might help stabilize positioning of ribosome-bound tRNAs. The chain is Large ribosomal subunit protein uL5 from Prochlorococcus marinus (strain MIT 9211).